A 362-amino-acid polypeptide reads, in one-letter code: Cobalt-precorrin-5B C(1)-methyltransferase (362 aa).

Belongs to the CbiD family.

It catalyses the reaction Co-precorrin-5B + S-adenosyl-L-methionine = Co-precorrin-6A + S-adenosyl-L-homocysteine. The protein operates within cofactor biosynthesis; adenosylcobalamin biosynthesis; cob(II)yrinate a,c-diamide from sirohydrochlorin (anaerobic route): step 6/10. Functionally, catalyzes the methylation of C-1 in cobalt-precorrin-5B to form cobalt-precorrin-6A. This chain is Cobalt-precorrin-5B C(1)-methyltransferase, found in Burkholderia cenocepacia (strain HI2424).